A 128-amino-acid chain; its full sequence is Mediator of RNA polymerase II transcription subunit 31-A (128 aa).

Belongs to the Mediator complex subunit 31 family. Component of the Mediator complex.

The protein localises to the nucleus. Its function is as follows. Component of the Mediator complex, a coactivator involved in the regulated transcription of nearly all RNA polymerase II-dependent genes. Mediator functions as a bridge to convey information from gene-specific regulatory proteins to the basal RNA polymerase II transcription machinery. Mediator is recruited to promoters by direct interactions with regulatory proteins and serves as a scaffold for the assembly of a functional preinitiation complex with RNA polymerase II and the general transcription factors. The protein is Mediator of RNA polymerase II transcription subunit 31-A (med31-a) of Xenopus laevis (African clawed frog).